A 585-amino-acid polypeptide reads, in one-letter code: Isocitrate dehydrogenase kinase/phosphatase (585 aa).

ATP contacts are provided by residues 315 to 321 (APGVKGM) and lysine 336. Residue aspartate 371 is part of the active site.

Belongs to the AceK family.

It is found in the cytoplasm. It carries out the reaction L-seryl-[isocitrate dehydrogenase] + ATP = O-phospho-L-seryl-[isocitrate dehydrogenase] + ADP + H(+). Bifunctional enzyme which can phosphorylate or dephosphorylate isocitrate dehydrogenase (IDH) on a specific serine residue. This is a regulatory mechanism which enables bacteria to bypass the Krebs cycle via the glyoxylate shunt in response to the source of carbon. When bacteria are grown on glucose, IDH is fully active and unphosphorylated, but when grown on acetate or ethanol, the activity of IDH declines drastically concomitant with its phosphorylation. This Photorhabdus laumondii subsp. laumondii (strain DSM 15139 / CIP 105565 / TT01) (Photorhabdus luminescens subsp. laumondii) protein is Isocitrate dehydrogenase kinase/phosphatase.